Reading from the N-terminus, the 374-residue chain is DNA-directed RNA polymerase subunit alpha (374 aa).

Residues 1–257 (MSDNAHNLLY…KHFSIFENMD (257 aa)) form an alpha N-terminal domain (alpha-NTD) region. The alpha C-terminal domain (alpha-CTD) stretch occupies residues 274–374 (KDDILHKLIL…EKIRAKNIKG (101 aa)).

This sequence belongs to the RNA polymerase alpha chain family. In terms of assembly, homodimer. The RNAP catalytic core consists of 2 alpha, 1 beta, 1 beta' and 1 omega subunit. When a sigma factor is associated with the core the holoenzyme is formed, which can initiate transcription.

The enzyme catalyses RNA(n) + a ribonucleoside 5'-triphosphate = RNA(n+1) + diphosphate. Its function is as follows. DNA-dependent RNA polymerase catalyzes the transcription of DNA into RNA using the four ribonucleoside triphosphates as substrates. In Chlamydia pneumoniae (Chlamydophila pneumoniae), this protein is DNA-directed RNA polymerase subunit alpha.